The chain runs to 299 residues: MIKTKTTSLLCFLLTAVILMNPSSSSPTDNYIYAVCSPAKFSPSSGYETNLNSLLSSFVTSTAQTRYANFTVPTGKPEPTVTVYGIYQCRGDLDPTACSTCVSSAVAQVGALCSNSYSGFLQMENCLIRYDNKSFLGVQDKTLILNKCGQPMEFNDQDALTKASDVIGSLGTGDGSYRTGGNGNVQGVAQCSGDLSTSQCQDCLSDAIGRLKSDCGMAQGGYVYLSKCYARFSVGGSHARQTPGPNFGHEGEKGNKDDNGVGKTLAIIIGIVTLIILLVVFLAFVGKCCRKLQDEKWCK.

An N-terminal signal peptide occupies residues 1–25 (MIKTKTTSLLCFLLTAVILMNPSSS). Over 26-264 (SPTDNYIYAV…NKDDNGVGKT (239 aa)) the chain is Extracellular. 2 consecutive Gnk2-homologous domains span residues 29 to 135 (DNYI…NKSF) and 137 to 237 (GVQD…VGGS). Intrachain disulfides connect cysteine 36/cysteine 113, cysteine 89/cysteine 98, cysteine 101/cysteine 126, cysteine 148/cysteine 215, cysteine 191/cysteine 200, and cysteine 203/cysteine 228. Residues 265–285 (LAIIIGIVTLIILLVVFLAFV) form a helical membrane-spanning segment. Residues 265–285 (LAIIIGIVTLIILLVVFLAFV) form a necessary and sufficient for plasmodesmal targeting region. At 286–299 (GKCCRKLQDEKWCK) the chain is on the cytoplasmic side.

This sequence belongs to the cysteine-rich repeat secretory protein family. Plasmodesmata-located proteins (PDLD) subfamily. As to quaternary structure, monomer. Interacts with PDLP1. In terms of assembly, (Microbial infection) Interacts with Grapevine fanleaf virus (GFLV) 2B-MP. As to expression, highly expressed in inflorescence nodes and rosette senescent leaves. Mostly expressed in cell wall junctions between leaf epidermal and mesophyl cells, and to a lesser extent at the cross walls between epidermal or cortex cells within the hypocotyl (at protein level). Low vascular expression in seedling and mature leaf, but high expression in senescing leaves (at protein level).

The protein localises to the cell membrane. The protein resides in the cell junction. It is found in the plasmodesma. In terms of biological role, modulates cell-to-cell trafficking. Has a positive role in innate immunity. Required for systemic acquired resistance (SAR) which is mediated by the signaling molecules azelaic acid (AzA), glycerol-3-phosphate (G3P), and salicylic acid (SA). Negative regulator of plasmodesmata permeability triggered by SA during immune responses, through regulation of callose deposition. Delays the trafficking of Tobacco Mosaic Virus (TMV) movement protein (MP). Required for symplastic signal transport. This Arabidopsis thaliana (Mouse-ear cress) protein is Plasmodesmata-located protein 5.